The primary structure comprises 1303 residues: Ninein-like protein (1303 aa).

2 consecutive EF-hand domains span residues 8-43 and 61-77; these read RYVAQLKDEFDSCDTTGTGYLDKEELTALCHKLSLD and RVNFEEFKEGFVAVLSR. Residues 107–135 form a disordered region; that stretch reads TKRYGRRSRPDKTDLELTADSDSLPFGTD. 2 EF-hand domains span residues 203-238 and 240-275; these read VTDGQVRAVWEELGVGAAGSLNREELSLVCDHIGLK and LEAEELDALFRKLDKDQDGKVSLIEFQSGLFKPHDH. Positions 253, 255, 257, 259, and 264 each coordinate Ca(2+). The stretch at 464–590 forms a coiled coil; sequence EYESEVLLEQ…CSELELLKSQ (127 aa). Residues 592-617 are compositionally biased toward polar residues; that stretch reads SGKRTRLSRSSLPANDWSNRRALTTE. A disordered region spans residues 592–634; the sequence is SGKRTRLSRSSLPANDWSNRRALTTESDSDDPEMKKGTSPQVR. 3 coiled-coil regions span residues 660–791, 821–876, and 919–1146; these read ELAM…LEAE, LAVL…LSAR, and SKQL…VQAQ. The disordered stretch occupies residues 1156–1181; sequence EQMGSGTQEHASHLQTQLAEQQRRTQ. Polar residues predominate over residues 1159-1175; sequence GSGTQEHASHLQTQLAE. A coiled-coil region spans residues 1202-1278; it reads QEQYEKLMAS…EQRQKSAEKK (77 aa).

It is found in the cytoplasm. Its subcellular location is the cytoskeleton. The protein resides in the microtubule organizing center. The protein localises to the centrosome. Its function is as follows. Required for the intracellular transport of organelles and vesicles, and is essential for the photoreceptor's outer segments formation, maintenance and function. The sequence is that of Ninein-like protein (Ninl) from Danio rerio (Zebrafish).